The chain runs to 294 residues: 4-hydroxy-tetrahydrodipicolinate synthase (294 aa).

Thr-45 serves as a coordination point for pyruvate. The active-site Proton donor/acceptor is the Tyr-133. The active-site Schiff-base intermediate with substrate is the Lys-161. Ile-203 provides a ligand contact to pyruvate.

Belongs to the DapA family. In terms of assembly, homotetramer; dimer of dimers.

Its subcellular location is the cytoplasm. The catalysed reaction is L-aspartate 4-semialdehyde + pyruvate = (2S,4S)-4-hydroxy-2,3,4,5-tetrahydrodipicolinate + H2O + H(+). Its pathway is amino-acid biosynthesis; L-lysine biosynthesis via DAP pathway; (S)-tetrahydrodipicolinate from L-aspartate: step 3/4. Catalyzes the condensation of (S)-aspartate-beta-semialdehyde [(S)-ASA] and pyruvate to 4-hydroxy-tetrahydrodipicolinate (HTPA). This is 4-hydroxy-tetrahydrodipicolinate synthase from Buchnera aphidicola subsp. Acyrthosiphon pisum (strain 5A).